We begin with the raw amino-acid sequence, 224 residues long: MERLLLWVSVLASLPEAFAHRDLTGKVFVFPRESATDHVKLITKLEKPLQNFTLCFRAYSDLSRGYSLFSYNLQGKDNELLVFKHRIGEYSLYIGKTKVTFKVREVFPRPVHICTSWESSTGIAEFWINGEPLVKKGLRQGYSVGAYPRIVLGQEQDSYGGGFDKTQSFVGEIGDLYMWGSVLSPNEIRLVYQGLSFPHPTILDWQALNYEMNGYVVIKPRVWS.

The N-terminal stretch at 1–19 is a signal peptide; sequence MERLLLWVSVLASLPEAFA. The Pentraxin (PTX) domain maps to 24–224; the sequence is TGKVFVFPRE…YVVIKPRVWS (201 aa). Asn51 carries N-linked (GlcNAc...) asparagine glycosylation. Residues Cys55 and Cys114 are joined by a disulfide bond. Positions 77, 78, 155, 156, 157, and 167 each coordinate Ca(2+).

It belongs to the pentraxin family. As to quaternary structure, homopentamer. Pentraxin (or pentaxin) have a discoid arrangement of 5 non-covalently bound subunits. Requires Ca(2+) as cofactor.

The protein resides in the secreted. This Sus scrofa (Pig) protein is Serum amyloid P-component (APCS).